We begin with the raw amino-acid sequence, 233 residues long: MSIHIGAKKGEIAETILLPGDPLRAKFIAENFLENIECYNEVRGMYGFTGSYKGKRISVQGTGMGMPSISIYVNELISDYGVKNLIRVGTCGAMQEEIQLRDVILAMSASTDSNMNKLRFGGMDYAPTASFRLLKKAYDVAQEKGILTRVGNVLTVDTFYNEDVNSWKKWAEFGTLAVEMETAALYTLAAKFGVDALTLLTVSDSLITGGQTTSEERQNTFMGMVKIALELAE.

Histidine 4 is a binding site for a purine D-ribonucleoside. Phosphate-binding positions include glycine 20, arginine 24, arginine 43, and 87–90; that span reads RVGT. A purine D-ribonucleoside-binding positions include glutamate 162, 179–181, and 203–204; these read EME and SD. Aspartate 204 serves as the catalytic Proton donor.

The protein belongs to the PNP/UDP phosphorylase family. As to quaternary structure, homohexamer; trimer of homodimers.

The catalysed reaction is a purine D-ribonucleoside + phosphate = a purine nucleobase + alpha-D-ribose 1-phosphate. It carries out the reaction a purine 2'-deoxy-D-ribonucleoside + phosphate = a purine nucleobase + 2-deoxy-alpha-D-ribose 1-phosphate. In terms of biological role, catalyzes the reversible phosphorolytic breakdown of the N-glycosidic bond in the beta-(deoxy)ribonucleoside molecules, with the formation of the corresponding free purine bases and pentose-1-phosphate. This chain is Purine nucleoside phosphorylase DeoD-type, found in Alkaliphilus metalliredigens (strain QYMF).